Consider the following 937-residue polypeptide: Scaffold attachment factor B1 (937 aa).

Residues 1-35 (MAETLSGLGDASAAGAAAVSSAASETGTRRLSDLR) form a disordered region. The residue at position 2 (A2) is an N-acetylalanine. Residues 11-24 (ASAAGAAAVSSAAS) are compositionally biased toward low complexity. S24 and S55 each carry phosphoserine. The region spanning 31–65 (LSDLRVIDLRAELKKRNLDSSGNKSVLMERLKKAI) is the SAP domain. Residues 64–117 (AIEDEGGNPDEIEVTSECNKKMPKRPSKGRKPEDEGVEDNGLEENSGDGQEDVE) form a disordered region. The span at 67-77 (DEGGNPDEIEV) shows a compositional bias: acidic residues. S79 carries the post-translational modification Phosphoserine. Positions 98–117 (EGVEDNGLEENSGDGQEDVE) are enriched in acidic residues. Glycyl lysine isopeptide (Lys-Gly) (interchain with G-Cter in SUMO2) cross-links involve residues K172 and K186. T188 is modified (phosphothreonine). 3 positions are modified to phosphoserine: S195, S197, and S209. The tract at residues 222 to 429 (GETCKSEPVK…EKGRSSCGRN (208 aa)) is disordered. Residues 225–234 (CKSEPVKEEG) show a composition bias toward basic and acidic residues. Residue K231 forms a Glycyl lysine isopeptide (Lys-Gly) (interchain with G-Cter in SUMO) linkage. Over residues 268 to 287 (EEEEEEEEEDQEEEQEEEGD) the composition is skewed to acidic residues. Residue K316 forms a Glycyl lysine isopeptide (Lys-Gly) (interchain with G-Cter in SUMO) linkage. Over residues 341 to 356 (EQSSTAAQLPEATSQE) the composition is skewed to polar residues. Residues 370–380 (QDSKEDVKKFA) show a composition bias toward basic and acidic residues. A Glycyl lysine isopeptide (Lys-Gly) (interchain with G-Cter in SUMO2) cross-link involves residue K403. Phosphoserine occurs at positions 405 and 406. Residues 412-423 (DTKRLSREEKGR) show a composition bias toward basic and acidic residues. K414 participates in a covalent cross-link: Glycyl lysine isopeptide (Lys-Gly) (interchain with G-Cter in SUMO2). The region spanning 428–506 (RNFWVSGLSS…KMISVEKAKS (79 aa)) is the RRM domain. S437 carries the post-translational modification Phosphoserine. Composition is skewed to basic and acidic residues over residues 499-573 (ISVE…ERSR) and 581-592 (GTERTVVMDKSK). Disordered regions lie at residues 499–661 (ISVE…WERE), 684–738 (RMER…YEVD), and 771–937 (FDHR…TRRY). Residues K505, K536, K565, and K592 each participate in a glycyl lysine isopeptide (Lys-Gly) (interchain with G-Cter in SUMO2) cross-link. Residues 550 to 814 (TDDGSTEKSK…RHGGPERHGR (265 aa)) form an interaction with POLR2A; SFRS1; SFRS9 and SFRS10 region. K600 participates in a covalent cross-link: Glycyl lysine isopeptide (Lys-Gly) (interchain with G-Cter in SUMO1); alternate. Residue K600 forms a Glycyl lysine isopeptide (Lys-Gly) (interchain with G-Cter in SUMO2); alternate linkage. S602, S604, S623, and S626 each carry phosphoserine. Over residues 603–661 (GSKERASKSQDRKSASREKRSVVSFDKVKESRKSRDSESRRERERSEREQRLQAQWERE) the composition is skewed to basic and acidic residues. Residues 621 to 638 (KRSVVSFDKVKESRKSRD) carry the Nuclear localization signal motif. Positions 621–937 (KRSVVSFDKV…PSDARFTRRY (317 aa)) are interaction with SAFB2. At K629 the chain carries N6-acetyllysine. Residues 652 to 726 (QRLQAQWERE…RQQELRYEQE (75 aa)) adopt a coiled-coil conformation. The span at 771 to 818 (FDHRDRGRYPNHSVDRREGSRSMMGDREGQHYPERHGGPERHGRDSRD) shows a compositional bias: basic and acidic residues. R832 carries the omega-N-methylarginine modification. Composition is skewed to basic and acidic residues over residues 838 to 854 (PRRD…DDRA) and 863 to 873 (MMERDHKRWQG). K869 is covalently cross-linked (Glycyl lysine isopeptide (Lys-Gly) (interchain with G-Cter in SUMO2)). An asymmetric dimethylarginine mark is found at R890, R896, R906, and R912. A compositionally biased stretch (basic and acidic residues) spans 927–937 (RPSDARFTRRY).

In terms of assembly, monomer and homodimer. Forms heterodimers with SAFB2. Interacts with KHDRBS3. Interacts with CLK2. Interacts with POLR2A, ASF/SRSF1, SRp30c/SRFS9 and TRA2B/SFRS10. Interacts with SRPK1 and inhibits its activity. Interacts with RBMX. Interacts with FUS. Interacts with ZBED4. Sumoylated by PIAS1 with SUMO1 and SUMO2/3, desumoylated by SENP1. Sumoylation is required for transcriptional repressor activity.

Its subcellular location is the nucleus. Binds to scaffold/matrix attachment region (S/MAR) DNA and forms a molecular assembly point to allow the formation of a 'transcriptosomal' complex (consisting of SR proteins and RNA polymerase II) coupling transcription and RNA processing. Functions as an estrogen receptor corepressor and can also bind to the HSP27 promoter and decrease its transcription. Thereby acts as a negative regulator of cell proliferation. When associated with RBMX, binds to and stimulates transcription from the SREBF1 promoter. The protein is Scaffold attachment factor B1 (Safb) of Mus musculus (Mouse).